The primary structure comprises 261 residues: Pantothenate synthetase (261 aa).

29 to 36 contacts ATP; sequence MGALHNGH. The Proton donor role is filled by histidine 36. (R)-pantoate is bound at residue glutamine 60. Glutamine 60 lines the beta-alanine pocket. 147-150 contributes to the ATP binding site; sequence GEKD. Glutamine 153 contributes to the (R)-pantoate binding site. Residue 184–187 coordinates ATP; sequence LSSR.

This sequence belongs to the pantothenate synthetase family. Homodimer.

It is found in the cytoplasm. The catalysed reaction is (R)-pantoate + beta-alanine + ATP = (R)-pantothenate + AMP + diphosphate + H(+). It functions in the pathway cofactor biosynthesis; (R)-pantothenate biosynthesis; (R)-pantothenate from (R)-pantoate and beta-alanine: step 1/1. Catalyzes the condensation of pantoate with beta-alanine in an ATP-dependent reaction via a pantoyl-adenylate intermediate. The protein is Pantothenate synthetase of Francisella tularensis subsp. holarctica (strain FTNF002-00 / FTA).